The following is a 376-amino-acid chain: Alcohol dehydrogenase class-3 (376 aa).

A1 bears the N-acetylalanine mark. Residues C47, H69, C99, C102, C105, C113, and C176 each coordinate Zn(2+).

Belongs to the zinc-containing alcohol dehydrogenase family. Class-III subfamily. In terms of assembly, homodimer. Zn(2+) is required as a cofactor.

The protein resides in the cytoplasm. It carries out the reaction a primary alcohol + NAD(+) = an aldehyde + NADH + H(+). It catalyses the reaction a secondary alcohol + NAD(+) = a ketone + NADH + H(+). The catalysed reaction is S-(hydroxymethyl)glutathione + NADP(+) = S-formylglutathione + NADPH + H(+). The enzyme catalyses S-(hydroxymethyl)glutathione + NAD(+) = S-formylglutathione + NADH + H(+). It carries out the reaction S-nitrosoglutathione + NADH + H(+) = S-(hydroxysulfenamide)glutathione + NAD(+). Class-III ADH is remarkably ineffective in oxidizing ethanol, but it readily catalyzes the oxidation of long-chain primary alcohols and the oxidation of S-(hydroxymethyl) glutathione. Also acts as a S-nitroso-glutathione reductase by catalyzing the NADH-dependent reduction of S-nitrosoglutathione, thereby regulating protein S-nitrosylation. This is Alcohol dehydrogenase class-3 from Scyliorhinus canicula (Small-spotted catshark).